The chain runs to 2250 residues: RNA1 polyprotein (2250 aa).

Positions 346 to 371 (SPTVTPSSTPSTSRSSSPEPRVSSPS) are enriched in low complexity. Residues 346–372 (SPTVTPSSTPSTSRSSSPEPRVSSPSG) form a disordered region. The region spanning 849–1020 (LRDAHNALSR…PHFHEFNLLA (172 aa)) is the SF3 helicase domain. A helical transmembrane segment spans residues 1225-1245 (VALCAVLLVGYLIIKFAIFLF). At Ser-1299 the chain carries O-(5'-phospho-RNA)-serine. Residues 1319–1532 (GPEEEPSQSL…YAQIVTLDDF (214 aa)) form the Peptidase C3 domain. Active-site for picornain 3C-like protease activity residues include His-1362, Asp-1400, and Cys-1495. Positions 1814–1956 (TNWFNGDYSR…SVNDVITEKF (143 aa)) constitute a RdRp catalytic domain.

This sequence belongs to the comoviridae genome polyprotein B family. Specific enzymatic cleavages by picornain 3C-like protease in vivo yield mature proteins. Picornain 3C-like protease is autocatalytically processed. Post-translationally, viral genome-linked protein (VPg) is uridylylated by the polymerase and is covalently linked to the 5'-end of genomic RNA. This uridylylated form acts as a nucleotide-peptide primer for the polymerase.

The protein resides in the host membrane. The catalysed reaction is RNA(n) + a ribonucleoside 5'-triphosphate = RNA(n+1) + diphosphate. Picornain 3C-like protease is a thiol protease that probably cleaves the B and M polyproteins. Its function is as follows. Viral genome-linked protein (VPg) plays a role in RNA replication. The sequence is that of RNA1 polyprotein from Balsamorhiza sagittata (Apple).